The chain runs to 547 residues: Germacrene A synthase (547 aa).

Residues Asp300, Asp304, Asp443, and Glu451 each coordinate Mg(2+). A DDXXD motif motif is present at residues 300–304; sequence DDTYD.

It belongs to the terpene synthase family. Tpsa subfamily. Requires Mg(2+) as cofactor. The cofactor is Mn(2+). Expressed in leaves.

The protein localises to the plastid. Its subcellular location is the chloroplast. The enzyme catalyses (2E,6E)-farnesyl diphosphate = germacrene A + diphosphate. The catalysed reaction is (2E,6E)-farnesyl diphosphate = (1S,2S,4R)-beta-elemene + diphosphate. It functions in the pathway secondary metabolite biosynthesis; terpenoid biosynthesis. Functionally, sesquiterpene synthase involved in the biosynthesis of volatile compounds widely used in aromatherapy and folk medicine, and present in culinary herbs. Mediates the conversion of (2E,6E)-farnesyl diphosphate (FPP) into germacrene A and beta-elemene. Not able to use (2E)-geranyl diphosphate (GPP) as substrate. This is Germacrene A synthase from Lavandula pedunculata subsp. lusitanica (French lavender).